The primary structure comprises 245 residues: MSHFKSAEEAAAAGKYVRTVRSFVKREGRLTKGQAAAIERLWPTVGLTLENGRLDLAMVFGREAPVTLEIGFGMGHSLVEMAANAPERDFIGIEVHEPGVGACLMAAEEAGVENFRVFHEDAVEVLKQCIPDNSLNCVQIFFPDPWHKKRHHKRRIVQPEFVKLLIQKIETGGVIHLATDWENYAEHMLEVLNDEPRLTNLSSSGDYVPRPENRPKTKFERRGEGKGHGVWDLQFKTNKSATLLG.

S-adenosyl-L-methionine is bound by residues E69, E94, D121, and D144. D144 is an active-site residue. Residues K148, D180, and 217 to 220 contribute to the substrate site; that span reads TKFE. Residues 200-225 form a disordered region; sequence NLSSSGDYVPRPENRPKTKFERRGEG. Basic and acidic residues predominate over residues 209-225; it reads PRPENRPKTKFERRGEG.

Belongs to the class I-like SAM-binding methyltransferase superfamily. TrmB family.

It catalyses the reaction guanosine(46) in tRNA + S-adenosyl-L-methionine = N(7)-methylguanosine(46) in tRNA + S-adenosyl-L-homocysteine. It functions in the pathway tRNA modification; N(7)-methylguanine-tRNA biosynthesis. Catalyzes the formation of N(7)-methylguanine at position 46 (m7G46) in tRNA. The chain is tRNA (guanine-N(7)-)-methyltransferase from Idiomarina loihiensis (strain ATCC BAA-735 / DSM 15497 / L2-TR).